A 547-amino-acid polypeptide reads, in one-letter code: ATP synthase subunit alpha (547 aa).

An ATP-binding site is contributed by 172–179 (GDRKTGKT).

It belongs to the ATPase alpha/beta chains family. In terms of assembly, F-type ATPases have 2 components, CF(1) - the catalytic core - and CF(0) - the membrane proton channel. CF(1) has five subunits: alpha(3), beta(3), gamma(1), delta(1), epsilon(1). CF(0) has three main subunits: a(1), b(2) and c(9-12). The alpha and beta chains form an alternating ring which encloses part of the gamma chain. CF(1) is attached to CF(0) by a central stalk formed by the gamma and epsilon chains, while a peripheral stalk is formed by the delta and b chains.

Its subcellular location is the cell membrane. The catalysed reaction is ATP + H2O + 4 H(+)(in) = ADP + phosphate + 5 H(+)(out). In terms of biological role, produces ATP from ADP in the presence of a proton gradient across the membrane. The alpha chain is a regulatory subunit. The protein is ATP synthase subunit alpha of Rhodococcus erythropolis (strain PR4 / NBRC 100887).